The following is a 1038-amino-acid chain: Importin-7 (1038 aa).

M1 carries the post-translational modification N-acetylmethionine. An Importin N-terminal domain is found at 22–101 (AERQLNEAHK…RENIVEAIIH (80 aa)). The interval 881-910 (EHENDSDDDDEAEDDDETEELGSDEDDIDE) is disordered. The segment covering 884–910 (NDSDDDDEAEDDDETEELGSDEDDIDE) has biased composition (acidic residues). S886 is subject to Phosphoserine. T898 bears the Phosphothreonine mark. Residues S903 and S1020 each carry the phosphoserine modification.

It belongs to the importin beta family. Forms a heterodimer with KPNB1. Interacts with histone H1. Interacts with H2A, H2B, H3 and H4 histones. Interacts with SNUPN and XPO1. Interacts with RPS7 and RPL5. Interacts with RPL23A (via BIB domain). Binds directly to nuclear pore complexes. Interacts with SMAD4 and NUP93; translocates SMAD4 to the nucleus through the NPC upon BMP7 stimulation resulting in activation of SMAD4 signaling. Interacts with phosphorylated SMAD2; the interaction facilitates translocation of SMAD2 to the nucleus. Interacts with SRP19. Interacts with RUNX2; the interaction inhibits RUNX2 nuclear translocation in osteoblasts. Interacts with HDAC6, DLX3 and KLF4; the interaction facilitates HDAC6, DLX3 and KLF4 nuclear translocation in dental papilla cells. In terms of assembly, (Microbial infection) Interacts with HIV-1 reverse transcription complex integrase and rev.

Its subcellular location is the cytoplasm. The protein resides in the nucleus. Functionally, functions in nuclear protein import, either by acting as autonomous nuclear transport receptor or as an adapter-like protein in association with the importin-beta subunit KPNB1. Acting autonomously, is thought to serve itself as receptor for nuclear localization signals (NLS) and to promote translocation of import substrates through the nuclear pore complex (NPC) by an energy requiring, Ran-dependent mechanism. At the nucleoplasmic side of the NPC, Ran binds to importin, the importin/substrate complex dissociates and importin is re-exported from the nucleus to the cytoplasm where GTP hydrolysis releases Ran. The directionality of nuclear import is thought to be conferred by an asymmetric distribution of the GTP- and GDP-bound forms of Ran between the cytoplasm and nucleus. Mediates autonomously the nuclear import of ribosomal proteins RPL23A, RPS7 and RPL5. In association with KPNB1 mediates the nuclear import of H1 histone and the Ran-binding site of IPO7 is not required but synergizes with that of KPNB1 in importin/substrate complex dissociation. Promotes odontoblast differentiation via promoting nuclear translocation of DLX3, KLF4, SMAD2, thereby facilitating the transcription of target genes that play a role in odontoblast differentiation. Facilitates BMP4-induced translocation of SMAD1 to the nucleus and recruitment to the MSX1 gene promoter, thereby promotes the expression of the odontogenic regulator MSX1 in dental mesenchymal cells. Also promotes odontoblast differentiation by facilitating the nuclear translocation of HDAC6 and subsequent repression of RUNX2 expression. Inhibits osteoblast differentiation by inhibiting nuclear translocation of RUNX2 and therefore inhibition of RUNX2 target gene transcription. In vitro, mediates nuclear import of H2A, H2B, H3 and H4 histones. Its function is as follows. (Microbial infection) Mediates the nuclear import of HIV-1 reverse transcription complex (RTC) integrase. Binds and mediates the nuclear import of HIV-1 Rev. The chain is Importin-7 (IPO7) from Homo sapiens (Human).